The following is an 83-amino-acid chain: Retinal cone rhodopsin-sensitive cGMP 3',5'-cyclic phosphodiesterase subunit gamma (83 aa).

A disordered region spans residues 1 to 51 (MSDSPCLSPPAPSQGPTTPRKGPPKFKQRQTRQFKSKPPKKGVKGFGDDIP). The segment covering 22-43 (GPPKFKQRQTRQFKSKPPKKGV) has biased composition (basic residues).

This sequence belongs to the rod/cone cGMP-PDE gamma subunit family. As to quaternary structure, tetramer composed of two catalytic chains (alpha and beta), and two inhibitory chains (gamma).

It carries out the reaction 3',5'-cyclic GMP + H2O = GMP + H(+). Functionally, participates in processes of transmission and amplification of the visual signal. cGMP-PDEs are the effector molecules in G-protein-mediated phototransduction in vertebrate rods and cones. This chain is Retinal cone rhodopsin-sensitive cGMP 3',5'-cyclic phosphodiesterase subunit gamma (Pde6h), found in Rattus norvegicus (Rat).